Here is a 371-residue protein sequence, read N- to C-terminus: Glutamate 5-kinase (371 aa).

K8 provides a ligand contact to ATP. The substrate site is built by S49, D136, and N149. Residues 169 to 170 (TD) and 213 to 219 (TGGMATK) each bind ATP. The 79-residue stretch at 278-356 (TGKLILDDGA…EDIPQVLGYA (79 aa)) folds into the PUA domain.

The protein belongs to the glutamate 5-kinase family.

Its subcellular location is the cytoplasm. The enzyme catalyses L-glutamate + ATP = L-glutamyl 5-phosphate + ADP. It functions in the pathway amino-acid biosynthesis; L-proline biosynthesis; L-glutamate 5-semialdehyde from L-glutamate: step 1/2. In terms of biological role, catalyzes the transfer of a phosphate group to glutamate to form L-glutamate 5-phosphate. This chain is Glutamate 5-kinase, found in Acaryochloris marina (strain MBIC 11017).